A 277-amino-acid polypeptide reads, in one-letter code: 5'-nucleotidase SurE (277 aa).

Residues Asp-14, Asp-15, Ser-46, and Asn-104 each contribute to the a divalent metal cation site.

It belongs to the SurE nucleotidase family. Requires a divalent metal cation as cofactor.

It localises to the cytoplasm. It carries out the reaction a ribonucleoside 5'-phosphate + H2O = a ribonucleoside + phosphate. In terms of biological role, nucleotidase that shows phosphatase activity on nucleoside 5'-monophosphates. The polypeptide is 5'-nucleotidase SurE (Picosynechococcus sp. (strain ATCC 27264 / PCC 7002 / PR-6) (Agmenellum quadruplicatum)).